The primary structure comprises 146 residues: Large ribosomal subunit protein uL15 (146 aa).

The interval 1–51 (MKLHELQPAPGSRKKAVRVGRGIGSGNGKTSGRGQKGQNARSGGGVRLGFE) is disordered. Gly residues-rich tracts occupy residues 21-35 (RGIG…GRGQ) and 42-51 (SGGGVRLGFE).

The protein belongs to the universal ribosomal protein uL15 family. In terms of assembly, part of the 50S ribosomal subunit.

Binds to the 23S rRNA. The polypeptide is Large ribosomal subunit protein uL15 (Geobacillus kaustophilus (strain HTA426)).